Reading from the N-terminus, the 183-residue chain is Oligoribonuclease (183 aa).

Residues 8-171 form the Exonuclease domain; it reads LIWIDLEMTG…DDIRDSIHEL (164 aa). Tyrosine 129 is an active-site residue.

This sequence belongs to the oligoribonuclease family.

Its subcellular location is the cytoplasm. Its function is as follows. 3'-to-5' exoribonuclease specific for small oligoribonucleotides. The sequence is that of Oligoribonuclease from Halorhodospira halophila (strain DSM 244 / SL1) (Ectothiorhodospira halophila (strain DSM 244 / SL1)).